Consider the following 218-residue polypeptide: Glutathione S-transferase Mu 6 (218 aa).

Residues 1–88 (MPVTLGYWDI…YLGRKHNLCG (88 aa)) form the GST N-terminal domain. Glutathione contacts are provided by residues 7–8 (YW), 46–50 (WLNDK), 59–60 (NL), and 72–73 (QS). In terms of domain architecture, GST C-terminal spans 90-208 (TEEERIRVDI…KTSRFLPSPV (119 aa)). A substrate-binding site is contributed by tyrosine 116.

It belongs to the GST superfamily. Mu family. Homodimer. In terms of tissue distribution, expressed in liver, stomach and small intestine. Not expressed in spleen, kidney, colon, heart, muscle, brain or lung.

It is found in the cytoplasm. The enzyme catalyses RX + glutathione = an S-substituted glutathione + a halide anion + H(+). Functionally, conjugation of reduced glutathione to a wide number of exogenous and endogenous hydrophobic electrophiles. The sequence is that of Glutathione S-transferase Mu 6 (Gstm6) from Mus musculus (Mouse).